We begin with the raw amino-acid sequence, 308 residues long: 2-methylisocitrate lyase (308 aa).

Serine 51–alanine 53 is a substrate binding site. Positions 90 and 92 each coordinate Mg(2+). Substrate contacts are provided by residues cysteine 127–glycine 128, arginine 160, glutamate 190, asparagine 212–threonine 214, arginine 243, and arginine 272.

It belongs to the isocitrate lyase/PEP mutase superfamily. Methylisocitrate lyase family. Homotetramer; dimer of dimers. The cofactor is Mg(2+).

It carries out the reaction (2S,3R)-3-hydroxybutane-1,2,3-tricarboxylate = pyruvate + succinate. The protein operates within organic acid metabolism; propanoate degradation. In terms of biological role, involved in the catabolism of short chain fatty acids (SCFA) via the 2-methylcitrate cycle I (propionate degradation route). Catalyzes the thermodynamically favored C-C bond cleavage of (2R,3S)-2-methylisocitrate to yield pyruvate and succinate via an alpha-carboxy-carbanion intermediate. The chain is 2-methylisocitrate lyase from Aeropyrum pernix (strain ATCC 700893 / DSM 11879 / JCM 9820 / NBRC 100138 / K1).